Consider the following 169-residue polypeptide: Cytochrome c-type biogenesis protein CcmE (169 aa).

Residues 1 to 7 (MTRKSRR) lie on the Cytoplasmic side of the membrane. The helical; Signal-anchor for type II membrane protein transmembrane segment at 8-28 (LILIAACGAVLALALGLILSA) threads the bilayer. Topologically, residues 29 to 169 (MSGSIVFFRS…DATLGQRSER (141 aa)) are periplasmic. Positions 122 and 126 each coordinate heme. The interval 135–169 (LKAQGRWQEGGGKEAPKDAAKPASADATLGQRSER) is disordered. Positions 145 to 154 (GGKEAPKDAA) are enriched in basic and acidic residues.

The protein belongs to the CcmE/CycJ family.

The protein resides in the cell inner membrane. In terms of biological role, heme chaperone required for the biogenesis of c-type cytochromes. Transiently binds heme delivered by CcmC and transfers the heme to apo-cytochromes in a process facilitated by CcmF and CcmH. The protein is Cytochrome c-type biogenesis protein CcmE of Methylorubrum populi (strain ATCC BAA-705 / NCIMB 13946 / BJ001) (Methylobacterium populi).